A 269-amino-acid polypeptide reads, in one-letter code: Cytochrome c oxidase subunit 3 (269 aa).

7 consecutive transmembrane segments (helical) span residues 13 to 33 (PFHL…LLVL), 46 to 66 (NGHY…SFWF), 90 to 110 (GVIL…WAFF), 138 to 160 (PLLN…HSII), 167 to 187 (ALYG…FQGV), 207 to 227 (FGTG…LVAL), and 245 to 265 (AGIL…ISIY).

It belongs to the cytochrome c oxidase subunit 3 family. In terms of assembly, component of the cytochrome c oxidase (complex IV, CIV), a multisubunit enzyme composed of a catalytic core of 3 subunits and several supernumerary subunits. The complex exists as a monomer or a dimer and forms supercomplexes (SCs) in the inner mitochondrial membrane with ubiquinol-cytochrome c oxidoreductase (cytochrome b-c1 complex, complex III, CIII).

The protein localises to the mitochondrion inner membrane. The catalysed reaction is 4 Fe(II)-[cytochrome c] + O2 + 8 H(+)(in) = 4 Fe(III)-[cytochrome c] + 2 H2O + 4 H(+)(out). In terms of biological role, component of the cytochrome c oxidase, the last enzyme in the mitochondrial electron transport chain which drives oxidative phosphorylation. The respiratory chain contains 3 multisubunit complexes succinate dehydrogenase (complex II, CII), ubiquinol-cytochrome c oxidoreductase (cytochrome b-c1 complex, complex III, CIII) and cytochrome c oxidase (complex IV, CIV), that cooperate to transfer electrons derived from NADH and succinate to molecular oxygen, creating an electrochemical gradient over the inner membrane that drives transmembrane transport and the ATP synthase. Cytochrome c oxidase is the component of the respiratory chain that catalyzes the reduction of oxygen to water. Electrons originating from reduced cytochrome c in the intermembrane space (IMS) are transferred via the dinuclear copper A center (CU(A)) of subunit 2 and heme A of subunit 1 to the active site in subunit 1, a binuclear center (BNC) formed by heme A3 and copper B (CU(B)). The BNC reduces molecular oxygen to 2 water molecules using 4 electrons from cytochrome c in the IMS and 4 protons from the mitochondrial matrix. The sequence is that of Cytochrome c oxidase subunit 3 (COX3) from Pyricularia grisea (Crabgrass-specific blast fungus).